A 37-amino-acid polypeptide reads, in one-letter code: Large ribosomal subunit protein bL36 (37 aa).

This sequence belongs to the bacterial ribosomal protein bL36 family.

In Nocardioides sp. (strain ATCC BAA-499 / JS614), this protein is Large ribosomal subunit protein bL36.